Reading from the N-terminus, the 272-residue chain is HMP-PP phosphatase (272 aa).

Asp-8 functions as the Nucleophile in the catalytic mechanism. Positions 8, 10, and 212 each coordinate Mg(2+).

It belongs to the HAD-like hydrolase superfamily. Cof family. It depends on Mg(2+) as a cofactor.

It carries out the reaction 4-amino-2-methyl-5-(diphosphooxymethyl)pyrimidine + H2O = 4-amino-2-methyl-5-(phosphooxymethyl)pyrimidine + phosphate + H(+). Catalyzes the hydrolysis of 4-amino-2-methyl-5-hydroxymethylpyrimidine pyrophosphate (HMP-PP) to 4-amino-2-methyl-5-hydroxymethylpyrimidine phosphate (HMP-P). The polypeptide is HMP-PP phosphatase (Escherichia coli O6:H1 (strain CFT073 / ATCC 700928 / UPEC)).